The chain runs to 394 residues: Putative gustatory receptor 22a (394 aa).

Topologically, residues 1–16 (MSQPKRIHRICKGLAR) are cytoplasmic. The helical transmembrane segment at 17–37 (FTIRATLYGSWVLGLFPFTFD) threads the bilayer. Residues 38 to 47 (SRKRRLNRSK) are Extracellular-facing. Asn44 is a glycosylation site (N-linked (GlcNAc...) asparagine). The helical transmembrane segment at 48 to 68 (WLLAYGLVLNLTLLVLSMLPS) threads the bilayer. The Cytoplasmic portion of the chain corresponds to 69–148 (TDDHNSVKVE…HTFNRYVIEK (80 aa)). Residues 149–169 (GLVIILEIGSSLVLYFGIPNS) traverse the membrane as a helical segment. A topological domain (extracellular) is located at residue Lys170. Residues 171 to 191 (IVVYEAVCIYIVQLEVLMVVM) traverse the membrane as a helical segment. Residues 192–256 (HFHLAVIYIY…TAIYDIQVTL (65 aa)) lie on the Cytoplasmic side of the membrane. The chain crosses the membrane as a helical span at residues 257–277 (FMATLFSVNIIVGHVLVICWI). Asn278 carries N-linked (GlcNAc...) asparagine glycosylation. At 278–281 (NITR) the chain is on the extracellular side. The helical transmembrane segment at 282 to 302 (FSLLVIFLLFPQALIINFWDL) threads the bilayer. The Cytoplasmic portion of the chain corresponds to 303–361 (WQGIAFCDLAESTGKKTSMILKLFNDMENMDQETERRVTEFTLFCSHRRLKVCHLGLLD). A helical transmembrane segment spans residues 362–382 (INYEMGFRMIITNILYVVFLV). Topologically, residues 383 to 394 (QFDYMNLKFKTD) are extracellular.

This sequence belongs to the insect chemoreceptor superfamily. Gustatory receptor (GR) family. Gr22e subfamily. As to expression, expressed in neurons of the terminal external chemosensory organ of larvae.

Its subcellular location is the cell membrane. Probable gustatory receptor which mediates acceptance or avoidance behavior, depending on its substrates. The chain is Putative gustatory receptor 22a (Gr22a) from Drosophila melanogaster (Fruit fly).